A 953-amino-acid polypeptide reads, in one-letter code: Communesin biosynthesis cluster-specific transcription factor cnsN (953 aa).

The segment at 371–418 (ELESTSPRTSHSSLSQDDTASLHSRSSLSSSPGRFPPSQKLVATSDSP) is disordered. Over residues 374–408 (STSPRTSHSSLSQDDTASLHSRSSLSSSPGRFPPS) the composition is skewed to low complexity.

It localises to the nucleus. In terms of biological role, transcriptional regulator; part of the gene cluster that mediates the biosynthesis of communesins, a prominent class of indole alkaloids with great potential as pharmaceuticals. The protein is Communesin biosynthesis cluster-specific transcription factor cnsN of Penicillium expansum (Blue mold rot fungus).